The sequence spans 375 residues: MIFNPVISNHKLSHYIHVFCTFTTFCILGTETRQAITALSTYTPAFVTAPTVLWSNCSSCMLMGIMQSLNAYTWMKDHQVLFLGVTTGYCGALSSFSSMLLEMFEHSTNLTNGNIANHTKLPNRAYGIMEFLSVLLVHLMVSMGSLIFGRQLGKEVIVAYGSSSFSKPYTPPSDTVKENAGDVDTQEMEKNILEFKFKTPAPFFKKFFDIVDKLAYALAFPLIILFVVLCAYYENYSRGKWTLPCLFGIFAGFLRYWLAEMFNKTNKKFPLGTFLANVFATLLIGIFTMVQRGKKHFSTDVPIVNSLNSCHIVSALISGFCGTLSTISTFINEGYKLSFINMLIYYTVSIAISYCLLVITLGSYAWTRGLTNPIC.

The Cytoplasmic segment spans residues 1-11; the sequence is MIFNPVISNHK. A helical transmembrane segment spans residues 12-32; that stretch reads LSHYIHVFCTFTTFCILGTET. At 33–34 the chain is on the extracellular side; that stretch reads RQ. Residues 35 to 55 traverse the membrane as a helical segment; the sequence is AITALSTYTPAFVTAPTVLWS. Topologically, residues 56–79 are cytoplasmic; it reads NCSSCMLMGIMQSLNAYTWMKDHQ. The helical transmembrane segment at 80-100 threads the bilayer; that stretch reads VLFLGVTTGYCGALSSFSSML. The Extracellular portion of the chain corresponds to 101-127; sequence LEMFEHSTNLTNGNIANHTKLPNRAYG. 2 N-linked (GlcNAc...) asparagine glycosylation sites follow: N109 and N117. A helical transmembrane segment spans residues 128-148; the sequence is IMEFLSVLLVHLMVSMGSLIF. At 149-213 the chain is on the cytoplasmic side; that stretch reads GRQLGKEVIV…FKKFFDIVDK (65 aa). A helical membrane pass occupies residues 214-234; that stretch reads LAYALAFPLIILFVVLCAYYE. Residue N235 is glycosylated (N-linked (GlcNAc...) asparagine). At 235-241 the chain is on the extracellular side; that stretch reads NYSRGKW. Residues 242–262 form a helical membrane-spanning segment; the sequence is TLPCLFGIFAGFLRYWLAEMF. The Cytoplasmic segment spans residues 263-268; that stretch reads NKTNKK. The helical transmembrane segment at 269–289 threads the bilayer; the sequence is FPLGTFLANVFATLLIGIFTM. The Extracellular segment spans residues 290-310; it reads VQRGKKHFSTDVPIVNSLNSC. A helical membrane pass occupies residues 311–331; the sequence is HIVSALISGFCGTLSTISTFI. Topologically, residues 332-338 are cytoplasmic; the sequence is NEGYKLS. The helical transmembrane segment at 339 to 359 threads the bilayer; it reads FINMLIYYTVSIAISYCLLVI. Over 360–375 the chain is Extracellular; that stretch reads TLGSYAWTRGLTNPIC.

Belongs to the fluoride channel Fluc/FEX (TC 1.A.43) family.

It localises to the cell membrane. The enzyme catalyses fluoride(in) = fluoride(out). Its function is as follows. Fluoride channel required for the rapid expulsion of cytoplasmic fluoride. This chain is Fluoride export protein 1, found in Saccharomyces cerevisiae (strain ATCC 204508 / S288c) (Baker's yeast).